Consider the following 80-residue polypeptide: Exodeoxyribonuclease 7 small subunit (80 aa).

The protein belongs to the XseB family. Heterooligomer composed of large and small subunits.

The protein localises to the cytoplasm. It catalyses the reaction Exonucleolytic cleavage in either 5'- to 3'- or 3'- to 5'-direction to yield nucleoside 5'-phosphates.. In terms of biological role, bidirectionally degrades single-stranded DNA into large acid-insoluble oligonucleotides, which are then degraded further into small acid-soluble oligonucleotides. This Pseudomonas putida (strain GB-1) protein is Exodeoxyribonuclease 7 small subunit.